A 161-amino-acid polypeptide reads, in one-letter code: C-type lectin lectoxin-Lio3 (161 aa).

The first 23 residues, 1–23 (MRRFIFMSLGLLVLAFSLSGIGA), serve as a signal peptide directing secretion. 3 disulfides stabilise this stretch: Cys27-Cys38, Cys55-Cys154, and Cys129-Cys146. In terms of domain architecture, C-type lectin spans 34–155 (HNISCYKLFT…CGLLHYFICQ (122 aa)). Asn35 carries N-linked (GlcNAc...) asparagine glycosylation. The Mannose-binding signature appears at 117–119 (KGE). The Ca(2+) site is built by Glu127, Asn142, and Asp143.

Belongs to the true venom lectin family. As to expression, expressed by the venom gland.

Its subcellular location is the secreted. Functionally, mannose-binding lectin which recognizes specific carbohydrate structures and agglutinates a variety of animal cells by binding to cell-surface glycoproteins and glycolipids. May be a calcium-dependent lectin. The sequence is that of C-type lectin lectoxin-Lio3 from Erythrolamprus poecilogyrus (Water snake).